The chain runs to 109 residues: Thioredoxin-like protein slr1139 (109 aa).

In terms of domain architecture, Thioredoxin spans 2–107; sequence SLLEITDAEF…LLELLKEELD (106 aa). Residues Cys31 and Cys34 are joined by a disulfide bond.

The protein belongs to the thioredoxin family.

This chain is Thioredoxin-like protein slr1139, found in Synechocystis sp. (strain ATCC 27184 / PCC 6803 / Kazusa).